Reading from the N-terminus, the 157-residue chain is Ribosomal RNA large subunit methyltransferase H (157 aa).

Residues Leu73, Gly104, and 123 to 128 (LGPLTL) each bind S-adenosyl-L-methionine.

This sequence belongs to the RNA methyltransferase RlmH family. In terms of assembly, homodimer.

It localises to the cytoplasm. The catalysed reaction is pseudouridine(1915) in 23S rRNA + S-adenosyl-L-methionine = N(3)-methylpseudouridine(1915) in 23S rRNA + S-adenosyl-L-homocysteine + H(+). Specifically methylates the pseudouridine at position 1915 (m3Psi1915) in 23S rRNA. The protein is Ribosomal RNA large subunit methyltransferase H of Xylella fastidiosa (strain M23).